A 103-amino-acid chain; its full sequence is Small ribosomal subunit protein uS10 (103 aa).

It belongs to the universal ribosomal protein uS10 family. As to quaternary structure, part of the 30S ribosomal subunit.

Its function is as follows. Involved in the binding of tRNA to the ribosomes. This chain is Small ribosomal subunit protein uS10, found in Cutibacterium acnes (strain DSM 16379 / KPA171202) (Propionibacterium acnes).